A 367-amino-acid chain; its full sequence is MRHANVTLTRFLAGDADHLMTTRPPTALQAVLHEVAASVKTIASALARGTLGDSAHADSVAGGAVLAYATRRRKLAETAARNRGADDAGKPEYQLAFDPLNCPWNADINGTAGSIFSVMRVQSQGSDADGAADTCAQAYGELDCEPYDEPYGAPFLQPGREQAAAGYTIYGPATMLIVTLGEGTHGFTLDGQTDEFMLTHPSIRIPAETGEIAVDASNERFWEPPVRRYVHECRDGRAGCRERDFSLRWSDALVAEVHRILMRGGLFLMPRDYRTRSAMRGRLSAVYDASPLGFLVEQAGGMATTGRERVLDAAPRTFHERMPLILGSASEVTRIGRYHREHDLGIDAPFTSPLFRERSLFLPETSL.

It belongs to the FBPase class 1 family. As to quaternary structure, homotetramer.

Its subcellular location is the cytoplasm. The enzyme catalyses beta-D-fructose 1,6-bisphosphate + H2O = beta-D-fructose 6-phosphate + phosphate. It functions in the pathway carbohydrate biosynthesis; gluconeogenesis. The protein is Fructose-1,6-bisphosphatase class 1 3 of Paraburkholderia phymatum (strain DSM 17167 / CIP 108236 / LMG 21445 / STM815) (Burkholderia phymatum).